The primary structure comprises 464 residues: Soluble pyridine nucleotide transhydrogenase (464 aa).

An FAD-binding site is contributed by 35–44 (DSRREVGGNC).

Belongs to the class-I pyridine nucleotide-disulfide oxidoreductase family. Requires FAD as cofactor.

The protein localises to the cytoplasm. The enzyme catalyses NAD(+) + NADPH = NADH + NADP(+). Its function is as follows. Conversion of NADPH, generated by peripheral catabolic pathways, to NADH, which can enter the respiratory chain for energy generation. This chain is Soluble pyridine nucleotide transhydrogenase, found in Pseudomonas syringae pv. tomato (strain ATCC BAA-871 / DC3000).